Reading from the N-terminus, the 247-residue chain is MSRKFCVGGNWKMNGDQKSIAEIAKTLSSAALDPNTEVVIGCPAIYLMYARNLLPCELGLAGQNAYKVAKGAFTGEISPAMLKDIGADWVILGHSERRAIFGESDALIAEKAEHALAEGLKVIACIGETLEEREAGKTNEVVARQMCAYAQKIKDWKNVVVAYEPVWAIGTGKTATPDQAQEVHAFLRQWLSDNISKEVSASLRIQYGGSVTAANAKELAKKPDIDGFLVGGASLKPEFVDIINARQ.

Residues asparagine 10 and lysine 12 each coordinate substrate. Histidine 94 functions as the Electrophile in the catalytic mechanism. Catalysis depends on glutamate 164, which acts as the Proton acceptor.

The protein belongs to the triosephosphate isomerase family. As to quaternary structure, homodimer.

The enzyme catalyses D-glyceraldehyde 3-phosphate = dihydroxyacetone phosphate. It participates in carbohydrate biosynthesis; gluconeogenesis. Its pathway is carbohydrate degradation; glycolysis; D-glyceraldehyde 3-phosphate from glycerone phosphate: step 1/1. This Drosophila simulans (Fruit fly) protein is Triosephosphate isomerase (Tpi).